The primary structure comprises 186 residues: MVEIFNYSTSVYEKHSSTNKLVSDFRKEIQMEGAAIRDIAKHAQILDMTPKPSALSTLMQTNKKTCWASFSPPANFHKQRFSTPYLVPSLGSPDKQDQDMEKISSYLKVLTRGKFSYRSETSPLLKKNKPSSDQDDTSKQSFDQDEEEDALVHEGKILLRALDQGIKSSNLLIDYVISRIFQFVQG.

Residues 121-146 (TSPLLKKNKPSSDQDDTSKQSFDQDE) are disordered.

The protein belongs to the chlamydial CPn_0422/CT_273/TC_0545 family.

This is an uncharacterized protein from Chlamydia muridarum (strain MoPn / Nigg).